A 450-amino-acid chain; its full sequence is Adenylosuccinate lyase (450 aa).

N(6)-(1,2-dicarboxyethyl)-AMP is bound by residues 9–10 (RY), 75–77 (HHD), and 101–102 (TS). Histidine 149 (proton donor/acceptor) is an active-site residue. Glutamine 223 is a N(6)-(1,2-dicarboxyethyl)-AMP binding site. The Proton donor/acceptor role is filled by serine 273. N(6)-(1,2-dicarboxyethyl)-AMP is bound by residues serine 274, 279–281 (KRN), and 318–322 (SVERV).

Belongs to the lyase 1 family. Adenylosuccinate lyase subfamily. Homotetramer. Residues from neighboring subunits contribute catalytic and substrate-binding residues to each active site.

It carries out the reaction N(6)-(1,2-dicarboxyethyl)-AMP = fumarate + AMP. It catalyses the reaction (2S)-2-[5-amino-1-(5-phospho-beta-D-ribosyl)imidazole-4-carboxamido]succinate = 5-amino-1-(5-phospho-beta-D-ribosyl)imidazole-4-carboxamide + fumarate. Its pathway is purine metabolism; AMP biosynthesis via de novo pathway; AMP from IMP: step 2/2. It functions in the pathway purine metabolism; IMP biosynthesis via de novo pathway; 5-amino-1-(5-phospho-D-ribosyl)imidazole-4-carboxamide from 5-amino-1-(5-phospho-D-ribosyl)imidazole-4-carboxylate: step 2/2. In terms of biological role, catalyzes two reactions in de novo purine nucleotide biosynthesis. Catalyzes the breakdown of 5-aminoimidazole- (N-succinylocarboxamide) ribotide (SAICAR or 2-[5-amino-1-(5-phospho-beta-D-ribosyl)imidazole-4-carboxamido]succinate) to 5-aminoimidazole-4-carboxamide ribotide (AICAR or 5-amino-1-(5-phospho-beta-D-ribosyl)imidazole-4-carboxamide) and fumarate, and of adenylosuccinate (ADS or N(6)-(1,2-dicarboxyethyl)-AMP) to adenosine monophosphate (AMP) and fumarate. The sequence is that of Adenylosuccinate lyase (purB) from Pyrococcus abyssi (strain GE5 / Orsay).